Consider the following 294-residue polypeptide: N-acetylmuramic acid 6-phosphate etherase (294 aa).

The SIS domain maps to 54 to 217; that stretch reads VISSFQNGGR…STASMIGIGK (164 aa). Catalysis depends on Glu-82, which acts as the Proton donor. Glu-113 is a catalytic residue.

The protein belongs to the GCKR-like family. MurNAc-6-P etherase subfamily. In terms of assembly, homodimer.

It carries out the reaction N-acetyl-D-muramate 6-phosphate + H2O = N-acetyl-D-glucosamine 6-phosphate + (R)-lactate. It participates in amino-sugar metabolism; N-acetylmuramate degradation. In terms of biological role, specifically catalyzes the cleavage of the D-lactyl ether substituent of MurNAc 6-phosphate, producing GlcNAc 6-phosphate and D-lactate. This chain is N-acetylmuramic acid 6-phosphate etherase, found in Bacillus cytotoxicus (strain DSM 22905 / CIP 110041 / 391-98 / NVH 391-98).